Reading from the N-terminus, the 120-residue chain is Large ribosomal subunit protein bL19 (120 aa).

Belongs to the bacterial ribosomal protein bL19 family.

In terms of biological role, this protein is located at the 30S-50S ribosomal subunit interface and may play a role in the structure and function of the aminoacyl-tRNA binding site. This is Large ribosomal subunit protein bL19 from Chlorobium limicola (strain DSM 245 / NBRC 103803 / 6330).